Here is a 312-residue protein sequence, read N- to C-terminus: MEGECRVLSIQSHVVRGYVGNRAAMFPLQVLGFEVDAVNSVQFSNHTGYAHWKGQVLTSQELHALYEGLKANNVNKYDYVLTGYTRDKSFLGMVVDIVQELKQQNSRLVYVCDPVMGDKWNGEGSMYVPQDLLPVYREKVVPMADIITPNQFEAELLSGRKIHSQEEAFAVMDVLHRMGPDTVVITSSDLPSPKGSDYLMALGSQRMRKPDGSTVTQRIRMEMRKVDPVFVGTGDLFAAMLLAWTHKHPDNLKVACEKTVSAMQHVLQRTIRCAKAEAGEGQKPSPAQLELRMVQSRKDIEDPEIVVQATVL.

At M1 the chain carries N-acetylmethionine. Pyridoxal is bound by residues S12 and T47. T47 contributes to the pyridoxal 5'-phosphate binding site. S59 carries the post-translational modification Phosphoserine. D113 contacts ATP. D113 serves as a coordination point for Na(+). A Mg(2+)-binding site is contributed by D118. T148 lines the Na(+) pocket. Residue 150–153 (NQFE) participates in ATP binding. S164 carries the post-translational modification Phosphoserine. Na(+) is bound at residue T186. Residue 186–187 (TS) coordinates ATP. Position 213 is a phosphoserine (S213). ATP is bound by residues 226 to 228 (VDP) and T233. Residue 234–235 (GD) coordinates pyridoxal 5'-phosphate. D235 (proton acceptor) is an active-site residue. At S285 the chain carries Phosphoserine.

It belongs to the pyridoxine kinase family. Homodimer. Zn(2+) is required as a cofactor. Requires Mg(2+) as cofactor.

Its subcellular location is the cytoplasm. The protein resides in the cytosol. The catalysed reaction is pyridoxal + ATP = pyridoxal 5'-phosphate + ADP + H(+). It carries out the reaction pyridoxamine + ATP = pyridoxamine 5'-phosphate + ADP + H(+). It catalyses the reaction pyridoxine + ATP = pyridoxine 5'-phosphate + ADP + H(+). Its pathway is cofactor metabolism; pyridoxal 5'-phosphate salvage; pyridoxal 5'-phosphate from pyridoxal: step 1/1. The protein operates within cofactor metabolism; pyridoxal 5'-phosphate salvage; pyridoxine 5'-phosphate from pyridoxine: step 1/1. It participates in cofactor metabolism; pyridoxal 5'-phosphate salvage; pyridoxamine 5'-phosphate from pyridoxamine: step 1/1. With respect to regulation, activity is increased in the presence of K(+)or Na(+). Catalyzes the phosphorylation of the dietary vitamin B6 vitamers pyridoxal (PL), pyridoxine (PN) and pyridoxamine (PM) to form pyridoxal 5'-phosphate (PLP), pyridoxine 5'-phosphate (PNP) and pyridoxamine 5'-phosphate (PMP), respectively. PLP is the active form of vitamin B6, and acts as a cofactor for over 140 different enzymatic reactions. The chain is Pyridoxal kinase (Pdxk) from Rattus norvegicus (Rat).